The primary structure comprises 259 residues: Haloacid dehalogenase-like hydrolase domain-containing protein 2 (259 aa).

The Mg(2+) site is built by Asp13 and Asn15. Substrate contacts are provided by residues 13 to 15 (DLN) and 46 to 47 (TN). A coiled-coil region spans residues 47–72 (NTTKESKKDLLERLKKLEFEISEDEI). Lys50 carries the post-translational modification N6-succinyllysine. Position 179 (Lys179) interacts with substrate. Position 204 (Asp204) interacts with Mg(2+).

This sequence belongs to the HAD-like hydrolase superfamily. Mg(2+) serves as cofactor.

The polypeptide is Haloacid dehalogenase-like hydrolase domain-containing protein 2 (Hdhd2) (Mus musculus (Mouse)).